The following is a 1001-amino-acid chain: Copper-transporting ATPase RAN1 (1001 aa).

The disordered stretch occupies residues 1–21; sequence MAPSRRDLQLTPVTGGSSSQI. The Cytoplasmic portion of the chain corresponds to 1-298; sequence MAPSRRDLQL…TGEASNMFRR (298 aa). Residues 11-21 show a composition bias toward polar residues; it reads TPVTGGSSSQI. 2 HMA domains span residues 56 to 122 and 133 to 199; these read RKIQ…FEAE and LVGQ…FEGS. Positions 67, 70, 144, and 147 each coordinate Cu(+). An HMA 3; degenerate domain is found at 207-273; that stretch reads DKLVLRVDGI…GIEEDGFGKF (67 aa). A helical membrane pass occupies residues 299-320; that stretch reads FISSLVLSIPLFFIQVICPHIA. Topologically, residues 321 to 338 are extracellular; the sequence is LFDALLVWRCGPFMMGDW. Residues 339-358 traverse the membrane as a helical segment; sequence LKWALVSVIQFVIGKRFYVA. Residues 359 to 365 are Cytoplasmic-facing; sequence AWRALRN. The helical transmembrane segment at 366 to 386 threads the bilayer; it reads GSTNMDVLVALGTSASYFYSV. Residues 387–403 are Extracellular-facing; that stretch reads GALLYGAVTGFWSPTYF. Residues 404 to 424 traverse the membrane as a helical segment; that stretch reads DASAMLITFVLLGKYLESLAK. Over 425 to 558 the chain is Cytoplasmic; the sequence is GKTSDAMKKL…KAPIQKFADY (134 aa). Residues 559-581 traverse the membrane as a helical segment; sequence VASIFVPVVITLALFTLVGWSIG. At 582–602 the chain is on the extracellular side; sequence GAVGAYPDEWLPENGTHFVFS. Residues 603–620 form a helical membrane-spanning segment; it reads LMFSISVVVIACPCALGL. Topologically, residues 621–931 are cytoplasmic; sequence ATPTAVMVAT…DLSRKTLTRI (311 aa). Aspartate 658 serves as the catalytic 4-aspartylphosphate intermediate. The Mg(2+) site is built by aspartate 877 and aspartate 881. The helical transmembrane segment at 932–951 threads the bilayer; sequence RLNYVFAMAYNVVSIPIAAG. Residues 952 to 963 lie on the Extracellular side of the membrane; that stretch reads VFFPVLRVQLPP. Residues 964–982 form a helical membrane-spanning segment; that stretch reads WAAGACMALSSVSVVCSSL. Over 983–1001 the chain is Cytoplasmic; it reads LLRRYKKPRLTTVLKITTE.

It belongs to the cation transport ATPase (P-type) (TC 3.A.3) family. Type IB subfamily.

It localises to the membrane. The catalysed reaction is Cu(+)(in) + ATP + H2O = Cu(+)(out) + ADP + phosphate + H(+). Its function is as follows. Involved in copper import into the cell. Essential for ethylene signaling, which requires copper. Acts by delivering copper to create functional hormone receptors. The chain is Copper-transporting ATPase RAN1 (RAN1) from Arabidopsis thaliana (Mouse-ear cress).